Here is a 503-residue protein sequence, read N- to C-terminus: Cytochrome P450 3A43 (503 aa).

C442 is a heme binding site.

This sequence belongs to the cytochrome P450 family. Heme serves as cofactor. Highest expression level in prostate. Also expressed in liver, kidney, pancreas, fetal liver and fetal skeletal muscle.

Its subcellular location is the endoplasmic reticulum membrane. It is found in the microsome membrane. It carries out the reaction an organic molecule + reduced [NADPH--hemoprotein reductase] + O2 = an alcohol + oxidized [NADPH--hemoprotein reductase] + H2O + H(+). Its function is as follows. Exhibits low testosterone 6-beta-hydroxylase activity. In Homo sapiens (Human), this protein is Cytochrome P450 3A43 (CYP3A43).